Consider the following 453-residue polypeptide: Indoleamine 2,3-dioxygenase (453 aa).

His-331 provides a ligand contact to heme.

This sequence belongs to the indoleamine 2,3-dioxygenase family. It depends on heme as a cofactor.

It catalyses the reaction D-tryptophan + O2 = N-formyl-D-kynurenine. The catalysed reaction is L-tryptophan + O2 = N-formyl-L-kynurenine. Its pathway is cofactor biosynthesis; NAD(+) biosynthesis. Functionally, catalyzes the first step in tryptophan catabolism in order to supply de novo nicotinamide adenine dinucleotide (NAD(+)) via the kynurenine pathway. Plays a role in the cellular response to telomere uncapping. The chain is Indoleamine 2,3-dioxygenase (BNA2) from Saccharomyces cerevisiae (strain ATCC 204508 / S288c) (Baker's yeast).